We begin with the raw amino-acid sequence, 455 residues long: Probable ATP-dependent RNA helicase DDX47 (455 aa).

Positions Met-1–Glu-21 are disordered. Ala-2 carries the N-acetylalanine modification. Ser-9 is modified (phosphoserine). The short motif at Lys-24–Ile-52 is the Q motif element. Residues Ile-55–Cys-226 form the Helicase ATP-binding domain. ATP is bound at residue Ala-68 to Thr-75. Thr-149 is modified (phosphothreonine). Positions Asp-174–Asp-177 match the DEAD box motif. The Helicase C-terminal domain occupies Lys-237 to Met-397. Residues Met-412–Arg-455 form a disordered region.

The protein belongs to the DEAD box helicase family. DDX47/RRP3 subfamily. As to quaternary structure, interacts with AGO1 and AGO2. Interacts with GABARAP. Interacts with NOL8; the interaction is RNA-dependent.

It is found in the nucleus. Its subcellular location is the nucleolus. It catalyses the reaction ATP + H2O = ADP + phosphate + H(+). Functionally, involved in apoptosis. May have a role in rRNA processing and mRNA splicing. Associates with pre-rRNA precursors. This chain is Probable ATP-dependent RNA helicase DDX47 (Ddx47), found in Mus musculus (Mouse).